Here is a 49-residue protein sequence, read N- to C-terminus: uncharacterized protein (49 aa).

The interval 1–49 is disordered; the sequence is MSNETFEQNEPKPTKVEELQPGDVEAVEDSTPVREITQTDHINKAMLQI. Basic and acidic residues predominate over residues 9–18; the sequence is NEPKPTKVEE.

This is an uncharacterized protein from Dictyostelium discoideum (Social amoeba).